A 125-amino-acid chain; its full sequence is Putative oxygen-evolving enhancer protein 2-2 (125 aa).

Phosphoserine is present on Ser15.

The protein belongs to the PsbP family.

The sequence is that of Putative oxygen-evolving enhancer protein 2-2 (PSBP2) from Arabidopsis thaliana (Mouse-ear cress).